The chain runs to 88 residues: Small ribosomal subunit protein bS20 (88 aa).

The protein belongs to the bacterial ribosomal protein bS20 family.

Its function is as follows. Binds directly to 16S ribosomal RNA. The protein is Small ribosomal subunit protein bS20 of Bartonella quintana (strain Toulouse) (Rochalimaea quintana).